The chain runs to 492 residues: Trypanothione reductase (492 aa).

Residue 35-52 (DVQTHHGPPHYAALGGTC) coordinates FAD. C52 and C57 are oxidised to a cystine. H461 acts as the Proton acceptor in catalysis.

It belongs to the class-I pyridine nucleotide-disulfide oxidoreductase family. As to quaternary structure, homodimer. FAD is required as a cofactor.

Its subcellular location is the cytoplasm. The enzyme catalyses trypanothione + NADP(+) = trypanothione disulfide + NADPH + H(+). Functionally, trypanothione is the parasite analog of glutathione; this enzyme is the equivalent of glutathione reductase. This is Trypanothione reductase (TPR) from Trypanosoma brucei brucei.